The primary structure comprises 452 residues: Isocitrate dehydrogenase [NADP], mitochondrial (452 aa).

The N-terminal 39 residues, 1–39 (MAGYLRAVSSLCRASGSARTWAPAALTVPSWPEQPRRHY), are a transit peptide targeting the mitochondrion. Lys-45, Lys-48, Lys-67, and Lys-69 each carry N6-acetyllysine. Lys-80 and Lys-106 each carry N6-acetyllysine; alternate. Lys-80 and Lys-106 each carry N6-succinyllysine; alternate. NADP(+) is bound by residues 115–117 (TIT) and Arg-122. Thr-117 lines the D-threo-isocitrate pocket. Residues 134–140 (SPNGTIR) and Arg-149 contribute to the D-threo-isocitrate site. An N6-acetyllysine modification is found at Lys-155. An N6-acetyllysine; alternate modification is found at Lys-166. Lys-166 carries the post-translational modification N6-succinyllysine; alternate. Arg-172 is a binding site for D-threo-isocitrate. Lys-180 and Lys-193 each carry N6-acetyllysine; alternate. An N6-succinyllysine; alternate mark is found at Lys-180 and Lys-193. N6-acetyllysine is present on Lys-199. Lys-256 carries the post-translational modification N6-acetyllysine; alternate. Lys-256 carries the N6-succinyllysine; alternate modification. An N6-acetyllysine mark is found at Lys-263, Lys-272, Lys-275, and Lys-280. Lys-282 bears the N6-acetyllysine; alternate mark. Position 282 is an N6-succinyllysine; alternate (Lys-282). Asp-291 contributes to the Mn(2+) binding site. An NADP(+)-binding site is contributed by Lys-299. Asp-314 contacts Mn(2+). NADP(+)-binding positions include 349-354 (GTVTRH) and Asn-367. Lys-384 carries the N6-acetyllysine; alternate modification. An N6-succinyllysine; alternate modification is found at Lys-384. N6-acetyllysine occurs at positions 400, 413, and 442.

The protein belongs to the isocitrate and isopropylmalate dehydrogenases family. Homodimer. The cofactor is Mg(2+). Requires Mn(2+) as cofactor. Post-translationally, acetylation at Lys-413 dramatically reduces catalytic activity. Deacetylated by SIRT3. In terms of tissue distribution, predominantly expressed in heart, liver and kidney. Expressed in activated B lymphocytes.

It is found in the mitochondrion. The enzyme catalyses D-threo-isocitrate + NADP(+) = 2-oxoglutarate + CO2 + NADPH. Its function is as follows. Plays a role in intermediary metabolism and energy production. It may tightly associate or interact with the pyruvate dehydrogenase complex. This is Isocitrate dehydrogenase [NADP], mitochondrial (Idh2) from Mus musculus (Mouse).